The sequence spans 342 residues: Tetraacyldisaccharide 4'-kinase (342 aa).

68–75 (TVGGTGKT) lines the ATP pocket.

It belongs to the LpxK family.

It catalyses the reaction a lipid A disaccharide + ATP = a lipid IVA + ADP + H(+). It functions in the pathway glycolipid biosynthesis; lipid IV(A) biosynthesis; lipid IV(A) from (3R)-3-hydroxytetradecanoyl-[acyl-carrier-protein] and UDP-N-acetyl-alpha-D-glucosamine: step 6/6. In terms of biological role, transfers the gamma-phosphate of ATP to the 4'-position of a tetraacyldisaccharide 1-phosphate intermediate (termed DS-1-P) to form tetraacyldisaccharide 1,4'-bis-phosphate (lipid IVA). This is Tetraacyldisaccharide 4'-kinase from Burkholderia multivorans (strain ATCC 17616 / 249).